The primary structure comprises 139 residues: Low molecular weight protein-tyrosine-phosphatase PtpB (139 aa).

Residue Cys7 is the Nucleophile of the active site. The active site involves Arg13. The active-site Proton donor is the Asp111.

The protein belongs to the low molecular weight phosphotyrosine protein phosphatase family.

The enzyme catalyses O-phospho-L-tyrosyl-[protein] + H2O = L-tyrosyl-[protein] + phosphate. In terms of biological role, dephosphorylates the phosphotyrosine-containing proteins. This Staphylococcus epidermidis (strain ATCC 35984 / DSM 28319 / BCRC 17069 / CCUG 31568 / BM 3577 / RP62A) protein is Low molecular weight protein-tyrosine-phosphatase PtpB (ptpB).